Here is a 217-residue protein sequence, read N- to C-terminus: Kunitz-type trypsin inhibitor-like 1 protein (217 aa).

The signal sequence occupies residues 1–26 (MKPLSPLTLSFFLFVFITNLSLAFSN). 2 disulfide bridges follow: cysteine 70-cysteine 115 and cysteine 168-cysteine 175. Asparagine 191 is a glycosylation site (N-linked (GlcNAc...) asparagine).

This sequence belongs to the protease inhibitor I3 (leguminous Kunitz-type inhibitor) family. As to expression, expressed in roots, leaves, epidermal layers of elongating stems, meristems and in the vascular system.

The protein localises to the secreted. Its function is as follows. Might act as a protease inhibitor involved in plant defense responses. This chain is Kunitz-type trypsin inhibitor-like 1 protein (PIP20-1), found in Pisum sativum (Garden pea).